The sequence spans 221 residues: Anti-sigma-W factor RsiW (221 aa).

Topologically, residues 1–87 (MKTCHSHDEL…AKWKLKAKRH (87 aa)) are cytoplasmic. Positions 30, 34, and 37 each coordinate Zn(2+). Residues 88–108 (PILVAAAIFLIMMSAAFFSAW) traverse the membrane as a helical segment. At 109–221 (SHTTDGIAVS…GEDDPHSTDN (113 aa)) the chain is on the extracellular side.

This sequence belongs to the zinc-associated anti-sigma factor (ZAS) superfamily. Anti-sigma-W factor family. Zn(2+) serves as cofactor. Is processed by three successive proteolytic events. First, the extracellular region of RsiW is cleaved by PrsW (Site-1 cleavage) in response to cell envelope stresses. Next, it undergoes cleavage at an intramembrane site (Site-2 cleavage) mediated by RasP. This cleavage uncovers a cryptic proteolytic tag with conserved alanine residues in the transmembrane segment, that is recognized mainly by the ClpXP protease, which completely degrades the protein in the cytoplasm and leads to the induction of the sigma-W-controlled genes.

The protein resides in the membrane. Is the anti-sigma factor for SigW. The presence of RsiW leads to the inactivation of SigW, and its proteolytic destruction to sigma-W activation. The sequence is that of Anti-sigma-W factor RsiW (rsiW) from Shouchella clausii (strain KSM-K16) (Alkalihalobacillus clausii).